The sequence spans 360 residues: 3-dehydroquinate synthase (360 aa).

Residues 105-109 (GVVGD), 129-130 (TT), Lys142, Lys151, and 169-172 (TLKT) contribute to the NAD(+) site. 3 residues coordinate Zn(2+): Glu184, His247, and His263.

It belongs to the sugar phosphate cyclases superfamily. Dehydroquinate synthase family. Co(2+) serves as cofactor. It depends on Zn(2+) as a cofactor. NAD(+) is required as a cofactor.

The protein localises to the cytoplasm. It catalyses the reaction 7-phospho-2-dehydro-3-deoxy-D-arabino-heptonate = 3-dehydroquinate + phosphate. It functions in the pathway metabolic intermediate biosynthesis; chorismate biosynthesis; chorismate from D-erythrose 4-phosphate and phosphoenolpyruvate: step 2/7. Its function is as follows. Catalyzes the conversion of 3-deoxy-D-arabino-heptulosonate 7-phosphate (DAHP) to dehydroquinate (DHQ). In Acetivibrio thermocellus (strain ATCC 27405 / DSM 1237 / JCM 9322 / NBRC 103400 / NCIMB 10682 / NRRL B-4536 / VPI 7372) (Clostridium thermocellum), this protein is 3-dehydroquinate synthase.